Reading from the N-terminus, the 316-residue chain is Ribosomal RNA small subunit methyltransferase H (316 aa).

S-adenosyl-L-methionine-binding positions include 35 to 37 (GGH), D55, F79, D101, and Q108. Residues 291–316 (ALKPSDQEVELNPRSRSSVLRVAEKL) are disordered.

Belongs to the methyltransferase superfamily. RsmH family.

It is found in the cytoplasm. It catalyses the reaction cytidine(1402) in 16S rRNA + S-adenosyl-L-methionine = N(4)-methylcytidine(1402) in 16S rRNA + S-adenosyl-L-homocysteine + H(+). In terms of biological role, specifically methylates the N4 position of cytidine in position 1402 (C1402) of 16S rRNA. The chain is Ribosomal RNA small subunit methyltransferase H from Vibrio cholerae serotype O1 (strain ATCC 39315 / El Tor Inaba N16961).